A 254-amino-acid chain; its full sequence is Ribonuclease HII (254 aa).

The region spanning 70 to 254 (TCIAGIDEAG…SFAPVKSVIS (185 aa)) is the RNase H type-2 domain. A divalent metal cation is bound by residues Asp76, Glu77, and Asp168.

This sequence belongs to the RNase HII family. Mn(2+) serves as cofactor. The cofactor is Mg(2+).

The protein localises to the cytoplasm. It catalyses the reaction Endonucleolytic cleavage to 5'-phosphomonoester.. Functionally, endonuclease that specifically degrades the RNA of RNA-DNA hybrids. This chain is Ribonuclease HII, found in Bacillus pumilus (strain SAFR-032).